The following is a 2103-amino-acid chain: Zinc finger SWIM domain-containing protein 8 homolog (2103 aa).

The SWIM-type zinc finger occupies 191 to 227; sequence FNVAVTFDRRRISSCNCTCTSSAYWCSHVVAVCLHRI. Disordered regions lie at residues 684–860, 1237–1262, 1310–1399, 1735–1772, 1786–1864, and 1888–1916; these read DGNR…GSTA, SSNP…GGSG, SSGS…IPNQ, MQMF…QVVQ, QQVQ…GVGV, and PFMQ…RQPH. Polar residues predominate over residues 724-740; sequence SALTESDSQSSFDAVSH. Composition is skewed to low complexity over residues 754 to 789 and 835 to 857; these read AVGV…STSS and GRVA…VGSG. A compositionally biased stretch (polar residues) spans 1237–1249; it reads SSNPPVRTRSNQP. The span at 1320-1351 shows a compositional bias: low complexity; that stretch reads GMVPTTNAAGTTGTPSSSSTTVSGSQNPNGNP. A compositionally biased stretch (gly residues) spans 1352–1377; that stretch reads SGSGGGGNGGGGNGGGGGGGGGGGGS. Residues 1755–1764 are compositionally biased toward pro residues; sequence QPPPQQPPNP. Low complexity-rich tracts occupy residues 1786 to 1813 and 1820 to 1835; these read QQVQ…SGFQ and AFQA…MQAG. 2 stretches are compositionally biased toward pro residues: residues 1836–1859 and 1894–1908; these read PPGP…PNGP and PPQP…PSQP.

This sequence belongs to the ZSWIM8 family. As to quaternary structure, component of the SCF-like E3 ubiquitin-protein ligase complex.

Its pathway is protein modification; protein ubiquitination. Functionally, substrate recognition component of a SCF-like E3 ubiquitin-protein ligase complex that promotes target-directed microRNA degradation (TDMD), a process that mediates degradation of microRNAs (miRNAs). The SCF-like E3 ubiquitin-protein ligase complex acts by catalyzing ubiquitination and subsequent degradation of AGO1, thereby exposing miRNAs for degradation. This is Zinc finger SWIM domain-containing protein 8 homolog from Drosophila melanogaster (Fruit fly).